The primary structure comprises 659 residues: Putative cysteine-rich receptor-like protein kinase 39 (659 aa).

The N-terminal stretch at 1-27 (MGKYSVLMIFIASSLLIVLQNVEIVNA) is a signal peptide. 2 Gnk2-homologous domains span residues 28–134 (VGCT…NHST) and 142–253 (PSVR…LYAF). The Extracellular portion of the chain corresponds to 28-289 (VGCTGSFFNG…KKKGRSIGYG (262 aa)). N-linked (GlcNAc...) asparagine glycosylation is found at Asn38, Asn64, Asn122, Asn131, Asn157, Asn170, Asn259, and Asn274. Residues 290 to 310 (GIIAIVVVLTFINILVFIGYI) traverse the membrane as a helical segment. Residues 311 to 659 (KVYGRRKESY…DDVFTELSCR (349 aa)) lie on the Cytoplasmic side of the membrane. Positions 353 to 619 (FSSENTLGQG…PTMSSVIIWL (267 aa)) constitute a Protein kinase domain. Residues 359-367 (LGQGGFGTV) and Lys381 contribute to the ATP site. Tyr426 is subject to Phosphotyrosine. The Proton acceptor role is filled by Asp478. Ser482 carries the post-translational modification Phosphoserine. Thr518 is subject to Phosphothreonine. Residue Tyr526 is modified to Phosphotyrosine.

Belongs to the protein kinase superfamily. Ser/Thr protein kinase family. CRK subfamily.

It localises to the membrane. The catalysed reaction is L-seryl-[protein] + ATP = O-phospho-L-seryl-[protein] + ADP + H(+). It catalyses the reaction L-threonyl-[protein] + ATP = O-phospho-L-threonyl-[protein] + ADP + H(+). The protein is Putative cysteine-rich receptor-like protein kinase 39 (CRK39) of Arabidopsis thaliana (Mouse-ear cress).